Consider the following 130-residue polypeptide: Small ribosomal subunit protein uS9 (130 aa).

Belongs to the universal ribosomal protein uS9 family.

The polypeptide is Small ribosomal subunit protein uS9 (Shewanella pealeana (strain ATCC 700345 / ANG-SQ1)).